The following is a 236-amino-acid chain: Small ribosomal subunit protein uS2c (236 aa).

Belongs to the universal ribosomal protein uS2 family.

The protein resides in the plastid. It is found in the chloroplast. The protein is Small ribosomal subunit protein uS2c (rps2) of Physcomitrium patens (Spreading-leaved earth moss).